The chain runs to 361 residues: tRNA 2-selenouridine synthase (361 aa).

The Rhodanese domain occupies 11 to 134 (LIADTPLIDV…LRQTAIQATW (124 aa)). Cys-94 (S-selanylcysteine intermediate) is an active-site residue.

The protein belongs to the SelU family. Monomer.

It catalyses the reaction 5-methylaminomethyl-2-thiouridine(34) in tRNA + selenophosphate + (2E)-geranyl diphosphate + H2O + H(+) = 5-methylaminomethyl-2-selenouridine(34) in tRNA + (2E)-thiogeraniol + phosphate + diphosphate. The catalysed reaction is 5-methylaminomethyl-2-thiouridine(34) in tRNA + (2E)-geranyl diphosphate = 5-methylaminomethyl-S-(2E)-geranyl-thiouridine(34) in tRNA + diphosphate. The enzyme catalyses 5-methylaminomethyl-S-(2E)-geranyl-thiouridine(34) in tRNA + selenophosphate + H(+) = 5-methylaminomethyl-2-(Se-phospho)selenouridine(34) in tRNA + (2E)-thiogeraniol. It carries out the reaction 5-methylaminomethyl-2-(Se-phospho)selenouridine(34) in tRNA + H2O = 5-methylaminomethyl-2-selenouridine(34) in tRNA + phosphate. In terms of biological role, involved in the post-transcriptional modification of the uridine at the wobble position (U34) of tRNA(Lys), tRNA(Glu) and tRNA(Gln). Catalyzes the conversion of 2-thiouridine (S2U-RNA) to 2-selenouridine (Se2U-RNA). Acts in a two-step process involving geranylation of 2-thiouridine (S2U) to S-geranyl-2-thiouridine (geS2U) and subsequent selenation of the latter derivative to 2-selenouridine (Se2U) in the tRNA chain. The polypeptide is tRNA 2-selenouridine synthase (Salmonella arizonae (strain ATCC BAA-731 / CDC346-86 / RSK2980)).